The primary structure comprises 383 residues: 8-amino-7-oxononanoate synthase (383 aa).

Arg21 lines the substrate pocket. Residue Gly108–Tyr109 participates in pyridoxal 5'-phosphate binding. His133 contacts substrate. Positions 179, 207, and 233 each coordinate pyridoxal 5'-phosphate. The residue at position 236 (Lys236) is an N6-(pyridoxal phosphate)lysine. A substrate-binding site is contributed by Thr350.

The protein belongs to the class-II pyridoxal-phosphate-dependent aminotransferase family. BioF subfamily. As to quaternary structure, homodimer. Pyridoxal 5'-phosphate serves as cofactor.

It catalyses the reaction 6-carboxyhexanoyl-[ACP] + L-alanine + H(+) = (8S)-8-amino-7-oxononanoate + holo-[ACP] + CO2. It functions in the pathway cofactor biosynthesis; biotin biosynthesis. Catalyzes the decarboxylative condensation of pimeloyl-[acyl-carrier protein] and L-alanine to produce 8-amino-7-oxononanoate (AON), [acyl-carrier protein], and carbon dioxide. The sequence is that of 8-amino-7-oxononanoate synthase from Yersinia pseudotuberculosis serotype IB (strain PB1/+).